The chain runs to 84 residues: Small ribosomal subunit protein uS17 (84 aa).

This sequence belongs to the universal ribosomal protein uS17 family. In terms of assembly, part of the 30S ribosomal subunit.

Its function is as follows. One of the primary rRNA binding proteins, it binds specifically to the 5'-end of 16S ribosomal RNA. This is Small ribosomal subunit protein uS17 from Buchnera aphidicola subsp. Cinara cedri (strain Cc).